A 1101-amino-acid chain; its full sequence is Structural maintenance of chromosomes protein 5 (1101 aa).

Residues 1–44 are disordered; it reads MATPSGKAAPPNPQVSKRSLPRDASSEVPSKRKNSNPLPTLPRP. Residues Ser-25 and Ser-35 each carry the phosphoserine modification. 80-87 lines the ATP pocket; sequence GANGTGKS. Positions 207 to 440 form a coiled coil; that stretch reads EMHRYHCELK…LEKQRRSVSD (234 aa). The flexible hinge stretch occupies residues 441-644; the sequence is HITRFDNLMN…TSLKVAQFLT (204 aa). 3 coiled-coil regions span residues 645–753, 780–828, and 888–927; these read VTVD…VTEL, EKNK…QVCN, and SVVEEYSKREVEIQQLTEELQGKKVELDEYRENISQVKER.

This sequence belongs to the SMC family. SMC5 subfamily. Forms a heterodimer with SMC6. Component of the SMC5-SMC6 complex which consists at least of SMC5, SMC6, NSMCE2, NSMCE1, NSMCE4A or EID3 and NSMCE3. Interacts with NSMCE2. Interacts with SLF2; this interaction induces an association of the SLF1-SLF2 complex with the SMC5-SMC6 complex. Interacts with RAD18; this interaction is increased in a SLF1 or SLF2-dependent manner. Sumoylated. In terms of processing, ubiquitinated. As to expression, expressed in testis but not ovary.

Its subcellular location is the nucleus. It is found in the chromosome. It localises to the PML body. The protein localises to the telomere. Core component of the SMC5-SMC6 complex, a complex involved in repair of DNA double-strand breaks by homologous recombination. The complex may promote sister chromatid homologous recombination by recruiting the SMC1-SMC3 cohesin complex to double-strand breaks. The complex is required for telomere maintenance via recombination and mediates sumoylation of shelterin complex (telosome) components. Required for sister chromatid cohesion during prometaphase and mitotic progression; the function seems to be independent of SMC6. The polypeptide is Structural maintenance of chromosomes protein 5 (Smc5) (Mus musculus (Mouse)).